We begin with the raw amino-acid sequence, 302 residues long: uncharacterized protein (302 aa).

An N-terminal signal peptide occupies residues 1–52 (MLKKLKVVRLLVNHLIYCPSIFMPYSKNMKKKIWNKTSLGALFMLFGTALTA).

Belongs to the MG439/MG440 family.

This is an uncharacterized protein from Mycoplasma pneumoniae (strain ATCC 29342 / M129 / Subtype 1) (Mycoplasmoides pneumoniae).